The following is a 461-amino-acid chain: Type IV secretion system protein PtlD homolog (461 aa).

Residues 1–24 (MAGLSRILLSCTLACLLAGQAAQA) form the signal peptide. 5 helical membrane passes run 118–138 (LQPL…YALL), 232–252 (WLLC…LAAS), 253–273 (LLIV…LFLV), 294–314 (ALVF…VLAG), and 333–353 (MLAA…VPLA). The segment covering 376-411 (AHRQAAARQYAPRPAAAAAAAGPHQAGTYAASATPA) has biased composition (low complexity). Residues 376–461 (AHRQAAARQY…RVLPRKPNLP (86 aa)) form a disordered region. Positions 439-453 (VRRDDRPAPAPDRRV) are enriched in basic and acidic residues.

The protein localises to the cell membrane. In Bordetella bronchiseptica (strain ATCC BAA-588 / NCTC 13252 / RB50) (Alcaligenes bronchisepticus), this protein is Type IV secretion system protein PtlD homolog (ptlD).